Here is a 388-residue protein sequence, read N- to C-terminus: Succinate--CoA ligase [ADP-forming] subunit beta (388 aa).

An ATP-grasp domain is found at 9-244 (KEILRKYNVP…LDEEDPAEIE (236 aa)). Residues Lys46, 53–55 (GRG), Glu99, Ala102, and Glu107 each bind ATP. Mg(2+)-binding residues include Asn199 and Asp213. Substrate-binding positions include Asn264 and 321 to 323 (GIM).

It belongs to the succinate/malate CoA ligase beta subunit family. In terms of assembly, heterotetramer of two alpha and two beta subunits. The cofactor is Mg(2+).

The catalysed reaction is succinate + ATP + CoA = succinyl-CoA + ADP + phosphate. It catalyses the reaction GTP + succinate + CoA = succinyl-CoA + GDP + phosphate. It functions in the pathway carbohydrate metabolism; tricarboxylic acid cycle; succinate from succinyl-CoA (ligase route): step 1/1. In terms of biological role, succinyl-CoA synthetase functions in the citric acid cycle (TCA), coupling the hydrolysis of succinyl-CoA to the synthesis of either ATP or GTP and thus represents the only step of substrate-level phosphorylation in the TCA. The beta subunit provides nucleotide specificity of the enzyme and binds the substrate succinate, while the binding sites for coenzyme A and phosphate are found in the alpha subunit. The chain is Succinate--CoA ligase [ADP-forming] subunit beta from Ralstonia pickettii (strain 12J).